Here is a 68-residue protein sequence, read N- to C-terminus: Dermaseptin-H5 (68 aa).

The first 17 residues, 1-17, serve as a signal peptide directing secretion; sequence KSLFLVLFLGMVSLSIC. Residues 18 to 38 constitute a propeptide that is removed on maturation; sequence EEEKRENEDEEKQEDDEQSEM. The disordered stretch occupies residues 19 to 40; that stretch reads EEKRENEDEEKQEDDEQSEMKR. The span at 25–35 shows a compositional bias: acidic residues; it reads EDEEKQEDDEQ. Residue L65 is modified to Leucine amide. The propeptide occupies 67-68; sequence EQ.

Expressed by the skin glands.

It is found in the secreted. Its function is as follows. Has antibacterial activity against the Gram-negative bacteria E.coli ATCC 11775 (MIC=0.5 uM), and the Gram-positive bacteria S.aureus ATCC 12600 (MIC=0.5 uM) and M.luteus ATCC 49732 (MIC=2.0 uM). Does not inhibit the growth of the fungus C.albicans. Probably acts by disturbing membrane functions with its amphipathic structure. The chain is Dermaseptin-H5 from Pithecopus azureus (Orange-legged monkey tree frog).